A 107-amino-acid polypeptide reads, in one-letter code: MNPETKARIDQLVTANKVMVFMKGTKLMPQCGFSNNVVQILNMLGIPFETLDVLADAEIRQGIKEYSNWPTIPQVYVNGEFVGGSDIMIELYQNGELQEMLEVALAS.

One can recognise a Glutaredoxin domain in the interval 6–107 (KARIDQLVTA…QEMLEVALAS (102 aa)). Lysine 23 serves as a coordination point for glutathione. Cysteine 31 lines the [2Fe-2S] cluster pocket. Glutathione-binding positions include arginine 60 and 85-86 (SD).

It belongs to the glutaredoxin family. Monothiol subfamily.

This is an uncharacterized protein from Synechocystis sp. (strain ATCC 27184 / PCC 6803 / Kazusa).